The chain runs to 321 residues: uncharacterized protein (321 aa).

This is an uncharacterized protein from Aquifex aeolicus (strain VF5).